A 225-amino-acid chain; its full sequence is Single-pass membrane and coiled-coil domain-containing protein 3 (225 aa).

Residues 69-92 (IIQAMTKIQKELQKIDEALKDQLE) are a coiled coil. The chain crosses the membrane as a helical span at residues 155–175 (IGTSLLGSIGVAVLSLGIDMI). The stretch at 182-209 (AVERTQLQAAIKSYEKHLEEFKAASAKY) forms a coiled coil.

Its subcellular location is the membrane. The chain is Single-pass membrane and coiled-coil domain-containing protein 3 (Smco3) from Mus musculus (Mouse).